The sequence spans 268 residues: Proteasome subunit beta type-4 (268 aa).

It belongs to the peptidase T1B family. In terms of assembly, the 26S proteasome consists of a 20S proteasome core and two 19S regulatory subunits. The 20S proteasome core is composed of 28 subunits that are arranged in four stacked rings, resulting in a barrel-shaped structure. The two end rings are each formed by seven alpha subunits, and the two central rings are each formed by seven beta subunits. The catalytic chamber with the active sites is on the inside of the barrel.

Its subcellular location is the cytoplasm. It localises to the nucleus. Non-catalytic component of the proteasome, a multicatalytic proteinase complex which is characterized by its ability to cleave peptides with Arg, Phe, Tyr, Leu, and Glu adjacent to the leaving group at neutral or slightly basic pH. The proteasome has an ATP-dependent proteolytic activity. The sequence is that of Proteasome subunit beta type-4 (Prosbeta7) from Drosophila melanogaster (Fruit fly).